We begin with the raw amino-acid sequence, 277 residues long: Glycerol-3-phosphate acyltransferase (277 aa).

Transmembrane regions (helical) follow at residues 3 to 23, 55 to 75, 79 to 99, 111 to 131, and 155 to 175; these read LFIF…AIIV, IMVM…AKLL, PVTV…PVFF, IGAL…TWLL, and LILV…ILVL. A disordered region spans residues 207 to 277; sequence SPATSAEQEF…PKTKTVKEKE (71 aa). A compositionally biased stretch (basic and acidic residues) spans 216–239; the sequence is FPGKEVIDTNIDETEKTEQAEAVK. Basic residues-rich tracts occupy residues 240-253 and 262-271; these read KPKV…AKKT and KPKSTKPKTK.

The protein belongs to the PlsY family. Probably interacts with PlsX.

Its subcellular location is the cell inner membrane. It carries out the reaction an acyl phosphate + sn-glycerol 3-phosphate = a 1-acyl-sn-glycero-3-phosphate + phosphate. Its pathway is lipid metabolism; phospholipid metabolism. Its function is as follows. Catalyzes the transfer of an acyl group from acyl-phosphate (acyl-PO(4)) to glycerol-3-phosphate (G3P) to form lysophosphatidic acid (LPA). This enzyme utilizes acyl-phosphate as fatty acyl donor, but not acyl-CoA or acyl-ACP. The sequence is that of Glycerol-3-phosphate acyltransferase from Legionella pneumophila (strain Corby).